The following is a 102-amino-acid chain: Small ribosomal subunit protein bS20 (102 aa).

The protein belongs to the bacterial ribosomal protein bS20 family.

Functionally, binds directly to 16S ribosomal RNA. In Synechococcus sp. (strain WH7803), this protein is Small ribosomal subunit protein bS20.